The chain runs to 294 residues: Large ribosomal subunit protein uL2 (294 aa).

Disordered stretches follow at residues 1 to 37 and 228 to 294; these read MGIRTLRPYTPSTRHMTVSDFEELSRDENGKRPRPEK and GSVM…RAAQ. The span at 23–37 shows a compositional bias: basic and acidic residues; sequence ELSRDENGKRPRPEK. Over residues 264-285 the composition is skewed to basic residues; the sequence is KTRKRNKPSNKFIVRGRRRGGR.

The protein belongs to the universal ribosomal protein uL2 family. In terms of assembly, part of the 50S ribosomal subunit. Forms a bridge to the 30S subunit in the 70S ribosome.

Functionally, one of the primary rRNA binding proteins. Required for association of the 30S and 50S subunits to form the 70S ribosome, for tRNA binding and peptide bond formation. It has been suggested to have peptidyltransferase activity; this is somewhat controversial. Makes several contacts with the 16S rRNA in the 70S ribosome. The protein is Large ribosomal subunit protein uL2 of Synechococcus sp. (strain JA-2-3B'a(2-13)) (Cyanobacteria bacterium Yellowstone B-Prime).